Reading from the N-terminus, the 58-residue chain is MPDPCCNDKCECKEGECKTGCKCKSCRCPPCDKCSSECKCTSKEECSKTCSKPCSCCP.

Positions 1 to 29 (MPDPCCNDKCECKEGECKTGCKCKSCRCP) are beta. The a divalent metal cation site is built by Cys-5, Cys-6, Cys-10, Cys-12, Cys-17, Cys-21, Cys-23, Cys-26, Cys-28, Cys-31, Cys-34, Cys-38, Cys-40, Cys-46, Cys-50, Cys-54, Cys-56, and Cys-57. Positions 30-58 (PCDKCSSECKCTSKEECSKTCSKPCSCCP) are alpha.

This sequence belongs to the metallothionein superfamily. Type 3 family.

Its function is as follows. Binds six divalent metal ions. Known to bind copper and cadmium. The protein is Metallothionein-2B of Callinectes sapidus (Blue crab).